The following is a 664-amino-acid chain: 26S rRNA (cytosine-C(5))-methyltransferase nsun-1 (664 aa).

The segment at 1–105 (MAIVKKKKVS…DDSDAGDHLP (105 aa)) is disordered. The segment covering 38-52 (PKKKKLVKKVKKSAK) has biased composition (basic residues). Residues 53-68 (KAHEEEPIEQVEKLQL) are compositionally biased toward basic and acidic residues. Acidic residues predominate over residues 84–99 (SDDEDLRDDYSDDDSD). Residues 313-319 (CSAPGGK), Asp337, and Asp382 each bind S-adenosyl-L-methionine. Cys439 (nucleophile) is an active-site residue. The interval 513-664 (KMSKQGVMEK…RRKKMLAKQQ (152 aa)) is disordered. The span at 519 to 528 (VMEKEKEKAA) shows a compositional bias: basic and acidic residues. Residues 541–550 (EASESSDDEE) are compositionally biased toward acidic residues. Residues 563 to 572 (KPAKKQQQKK) are compositionally biased toward basic residues. Positions 606–618 (KAAEKQAAVKEDD) are enriched in basic and acidic residues. Composition is skewed to basic residues over residues 627–644 (KRAKKPTQFKSKVPKRAA) and 652–664 (VKNRRKKMLAKQQ).

Belongs to the class I-like SAM-binding methyltransferase superfamily. RsmB/NOP family.

It localises to the nucleus. The protein localises to the nucleolus. The enzyme catalyses a cytidine in 26S rRNA + S-adenosyl-L-methionine = a 5-methylcytidine in 26S rRNA + S-adenosyl-L-homocysteine + H(+). In terms of biological role, methyltransferase which methylates the carbon-5 position of cytosine 2982 to 5-methylcytosine (m5C2982) in 26S rRNA. May play a role in the translation of leucine and proline codons. May be required for the translation of specific mRNAs such as mRNAs involved in gonad development, collagen production and cuticle integrity. Plays a role in ensuring the correct localization of the germline-specific protein gld-1 during development. Not required for pre-rRNA processing, the production of mature 5S, 5.8S, 18S or 26S rRNAs or global translation. Plays a role in positively regulating fertility. The protein is 26S rRNA (cytosine-C(5))-methyltransferase nsun-1 of Caenorhabditis elegans.